A 303-amino-acid polypeptide reads, in one-letter code: tRNA dimethylallyltransferase (303 aa).

ATP is bound at residue 12-19; that stretch reads GPTGVGKT. 14 to 19 contacts substrate; it reads TGVGKT. The interval 37–40 is interaction with substrate tRNA; the sequence is DSAQ.

This sequence belongs to the IPP transferase family. As to quaternary structure, monomer. Mg(2+) serves as cofactor.

The enzyme catalyses adenosine(37) in tRNA + dimethylallyl diphosphate = N(6)-dimethylallyladenosine(37) in tRNA + diphosphate. Catalyzes the transfer of a dimethylallyl group onto the adenine at position 37 in tRNAs that read codons beginning with uridine, leading to the formation of N6-(dimethylallyl)adenosine (i(6)A). This Fusobacterium nucleatum subsp. nucleatum (strain ATCC 25586 / DSM 15643 / BCRC 10681 / CIP 101130 / JCM 8532 / KCTC 2640 / LMG 13131 / VPI 4355) protein is tRNA dimethylallyltransferase.